The primary structure comprises 166 residues: Fer3-like protein (166 aa).

Residues 57–88 (FEEGDPEEEECEVDQGDGEEEEEEERGRGVSL) form a disordered region. The span at 60–80 (GDPEEEECEVDQGDGEEEEEE) shows a compositional bias: acidic residues. One can recognise a bHLH domain in the interval 101 to 153 (AQRQAANIRERKRMFNLNEAFDQLRRKVPTFAYEKRLSRIETLRLAIVYISFM).

As to quaternary structure, heterodimer with TCF3/E12. Interacts with the bHLH domain of TCF3/E12.

It localises to the nucleus. Transcription factor that binds to the E-box and functions as inhibitor of transcription. DNA binding requires dimerization with an E protein. Inhibits transcription activation by ASCL1/MASH1 by sequestering E proteins. This chain is Fer3-like protein (FERD3L), found in Homo sapiens (Human).